The primary structure comprises 109 residues: Nucleoid-associated protein SO_2014 (109 aa).

The protein belongs to the YbaB/EbfC family. Homodimer.

It localises to the cytoplasm. Its subcellular location is the nucleoid. Binds to DNA and alters its conformation. May be involved in regulation of gene expression, nucleoid organization and DNA protection. The protein is Nucleoid-associated protein SO_2014 of Shewanella oneidensis (strain ATCC 700550 / JCM 31522 / CIP 106686 / LMG 19005 / NCIMB 14063 / MR-1).